The primary structure comprises 182 residues: MVLKNIWRKNKIFDKENLSRELKCYKYANKFIKKRSNKIERKLSQNIFDDIIEKQTKDNRSGNLAVIFVESFHETELHVCQLNQESESIGQLIKEFNRIKYHIENNVDFIEEFEKHLYEMDRYDEYIKQYTFNKDSVLKYIEDNIELIMREKYEWQKQLEYFDMKLKLVRYVLYHFPKIYAQ.

This is an uncharacterized protein from Acanthamoeba polyphaga mimivirus (APMV).